A 732-amino-acid chain; its full sequence is Zinc-exporting P-type ATPase (732 aa).

Residues 29–96 form the HMA domain; the sequence is GRMRVRADWV…AIGGAKHVAA (68 aa). Transmembrane regions (helical) follow at residues 105 to 123, 146 to 164, 172 to 186, 195 to 209, 342 to 366, and 372 to 390; these read HSTE…GGAA, MVAT…RGAL, AGTD…IASL, LTVL…YLQD, VGEN…LVTG, and MTML…TPTA. Residue Asp423 is the 4-aspartylphosphate intermediate of the active site. Mg(2+) is bound by residues Asp423, Thr425, and Asp625. 2 helical membrane-spanning segments follow: residues 676 to 695 and 705 to 724; these read AVDV…AAGL and PVLA…ANSS.

The protein belongs to the cation transport ATPase (P-type) (TC 3.A.3) family. Type IB subfamily.

The protein localises to the cell membrane. It catalyses the reaction Zn(2+)(in) + ATP + H2O = Zn(2+)(out) + ADP + phosphate + H(+). Its function is as follows. Zn(2+) efflux transporter which is involved in detoxification of zinc during infection. The chain is Zinc-exporting P-type ATPase from Mycobacterium marinum (strain ATCC BAA-535 / M).